The chain runs to 219 residues: Ribosome maturation factor RimP (219 aa).

Residues 195–219 (EGRIPGDDLGAEPEDAASTETQEKK) form a disordered region.

The protein belongs to the RimP family.

Its subcellular location is the cytoplasm. Required for maturation of 30S ribosomal subunits. This is Ribosome maturation factor RimP from Brucella melitensis biotype 2 (strain ATCC 23457).